The primary structure comprises 209 residues: tRNA (guanine-N(7)-)-methyltransferase (209 aa).

S-adenosyl-L-methionine contacts are provided by Glu40, Glu65, and Asp114. Asp114 is a catalytic residue. Residues Asp150 and Thr188–Glu191 each bind substrate.

Belongs to the class I-like SAM-binding methyltransferase superfamily. TrmB family.

It carries out the reaction guanosine(46) in tRNA + S-adenosyl-L-methionine = N(7)-methylguanosine(46) in tRNA + S-adenosyl-L-homocysteine. The protein operates within tRNA modification; N(7)-methylguanine-tRNA biosynthesis. Its function is as follows. Catalyzes the formation of N(7)-methylguanine at position 46 (m7G46) in tRNA. In Bdellovibrio bacteriovorus (strain ATCC 15356 / DSM 50701 / NCIMB 9529 / HD100), this protein is tRNA (guanine-N(7)-)-methyltransferase.